The chain runs to 243 residues: MTKLFIPYIMGNKSFIKNMKILDENGADIIEIGVPFSDPVADGPIIMEAGNRAIKQGVTINYIFNELSNNKDEINCKYVLMTYYNIIVSYGEEAFFKECEKVGVYGVIIPDLPYELTQKLKHKISKFDVKVISLISMTANDDRIKEIVKHAEGFIYTVTMNATTGKNGTFHPQLKDKLKHLKAHTDIPVVAGFGIRTKEHIKDLATVADGVVIGSEIVKRFCQDNNEDTIHYLKQVRETLDTL.

Residues E31 and D42 each act as proton acceptor in the active site.

The protein belongs to the TrpA family. Tetramer of two alpha and two beta chains.

It carries out the reaction (1S,2R)-1-C-(indol-3-yl)glycerol 3-phosphate + L-serine = D-glyceraldehyde 3-phosphate + L-tryptophan + H2O. Its pathway is amino-acid biosynthesis; L-tryptophan biosynthesis; L-tryptophan from chorismate: step 5/5. Its function is as follows. The alpha subunit is responsible for the aldol cleavage of indoleglycerol phosphate to indole and glyceraldehyde 3-phosphate. The polypeptide is Tryptophan synthase alpha chain (Staphylococcus haemolyticus (strain JCSC1435)).